Here is a 408-residue protein sequence, read N- to C-terminus: Na(+)-translocating NADH-quinone reductase subunit F (408 aa).

A helical membrane pass occupies residues V4–F24. Residues G33–I127 form the 2Fe-2S ferredoxin-type domain. C70, C76, C79, and C111 together coordinate [2Fe-2S] cluster. One can recognise an FAD-binding FR-type domain in the interval I130 to K270.

The protein belongs to the NqrF family. Composed of six subunits; NqrA, NqrB, NqrC, NqrD, NqrE and NqrF. It depends on [2Fe-2S] cluster as a cofactor. FAD is required as a cofactor.

It is found in the cell inner membrane. It catalyses the reaction a ubiquinone + n Na(+)(in) + NADH + H(+) = a ubiquinol + n Na(+)(out) + NAD(+). NQR complex catalyzes the reduction of ubiquinone-1 to ubiquinol by two successive reactions, coupled with the transport of Na(+) ions from the cytoplasm to the periplasm. The first step is catalyzed by NqrF, which accepts electrons from NADH and reduces ubiquinone-1 to ubisemiquinone by a one-electron transfer pathway. The sequence is that of Na(+)-translocating NADH-quinone reductase subunit F from Shewanella denitrificans (strain OS217 / ATCC BAA-1090 / DSM 15013).